Here is a 211-residue protein sequence, read N- to C-terminus: ATP-dependent Clp protease proteolytic subunit (211 aa).

The active-site Nucleophile is Ser106. The active site involves His131.

Belongs to the peptidase S14 family. In terms of assembly, fourteen ClpP subunits assemble into 2 heptameric rings which stack back to back to give a disk-like structure with a central cavity, resembling the structure of eukaryotic proteasomes.

The protein localises to the cytoplasm. It catalyses the reaction Hydrolysis of proteins to small peptides in the presence of ATP and magnesium. alpha-casein is the usual test substrate. In the absence of ATP, only oligopeptides shorter than five residues are hydrolyzed (such as succinyl-Leu-Tyr-|-NHMec, and Leu-Tyr-Leu-|-Tyr-Trp, in which cleavage of the -Tyr-|-Leu- and -Tyr-|-Trp bonds also occurs).. Its function is as follows. Cleaves peptides in various proteins in a process that requires ATP hydrolysis. Has a chymotrypsin-like activity. Plays a major role in the degradation of misfolded proteins. The chain is ATP-dependent Clp protease proteolytic subunit from Maricaulis maris (strain MCS10) (Caulobacter maris).